A 387-amino-acid chain; its full sequence is uncharacterized protein (387 aa).

It belongs to the geranylgeranyl reductase family. ChlP subfamily.

This is an uncharacterized protein from Methanosarcina barkeri (strain Fusaro / DSM 804).